A 129-amino-acid chain; its full sequence is Large ribosomal subunit protein bL12 (129 aa).

This sequence belongs to the bacterial ribosomal protein bL12 family. Homodimer. Part of the ribosomal stalk of the 50S ribosomal subunit. Forms a multimeric L10(L12)X complex, where L10 forms an elongated spine to which 2 to 4 L12 dimers bind in a sequential fashion. Binds GTP-bound translation factors.

Forms part of the ribosomal stalk which helps the ribosome interact with GTP-bound translation factors. Is thus essential for accurate translation. This chain is Large ribosomal subunit protein bL12, found in Protochlamydia amoebophila (strain UWE25).